The primary structure comprises 146 residues: Core protein OPG114 (146 aa).

It belongs to the orthopoxvirus OPG114 family. Part of a complex composed of the kinase OPG054, OPG092, OPG100, OPG114, OPG115, OPG142 and OPG157.

It localises to the virion. Its function is as follows. Late protein which is part of a large complex required for early virion morphogenesis. This complex participates in the formation of virosomes and the incorporation of virosomal contents into nascent immature virions. In Monkeypox virus, this protein is Core protein OPG114 (OPG114).